A 124-amino-acid polypeptide reads, in one-letter code: RNA polymerase-binding protein RbpA (124 aa).

Residues C34, H38, C56, and C59 each coordinate Zn(2+). A sufficient for interaction with HrdB (SigA) region spans residues 73 to 124 (EKKAKPARTHWDMLMERRTREELEEVLEERLAVLRSGAMNIAVHPRDSRKSA).

It belongs to the RNA polymerase-binding protein RbpA family. Homodimer. Forms a complex with the RNAP, and a complex with RNAP plus principal sigma factor HrdB associated with promoter. Binds to free principal sigma factors HrdB and HrdA, probably via the sigma-2 domain, but not to 6 other sigma factors tested. Requires Zn(2+) as cofactor.

Binds to RNA polymerase (RNAP), stimulating transcription from principal, but not alternative sigma factor promoters. Stimulates transcription from several principal sigma factor HrdB (SigA)-dependent promoters but not from a SigR-dependent promoter. Stimulation occurs in the presence of the transcription initiation inhibitor rifampicin (Rif). In Streptomyces coelicolor (strain ATCC BAA-471 / A3(2) / M145), this protein is RNA polymerase-binding protein RbpA.